We begin with the raw amino-acid sequence, 24 residues long: Homotarsinin (24 aa).

The residue at position 24 (R24) is an Arginine amide.

In terms of assembly, homodimer; disulfide-linked. As to expression, expressed by the skin glands.

It is found in the secreted. Functionally, antimicrobial peptide. Active against Gram-negative bacteria E.coli ATCC 25922 (MIC=1.5 uM) and P.aeruginosa ATTC 27853 (MIC=23.2 uM) and against Gram-positive bacterium S.aureus ATCC 29313 (MIC=11.6 uM). Has no hemolytic activity. Associates with and disrupts membranes in vitro. The polypeptide is Homotarsinin (Phyllomedusa tarsius (Brownbelly leaf frog)).